A 172-amino-acid polypeptide reads, in one-letter code: MRASLSILVAFPALAAARDVVTIGMTGSWHPADVTEDNTKLLGTALSGSSFSKSVGDKRVCYSEVTSLETQVVAGTNYRFHISGCDVTDSDGECSTSALSSCELSGFVVQIFEQSWTNTLKVTNIKAEEAATASSSSTPAPTPASTSTSASSSEETMLQSSVQQRAMFSDFV.

The N-terminal stretch at 1-17 (MRASLSILVAFPALAAA) is a signal peptide. The Secondary area of contact signature appears at 71 to 75 (QVVAG). The tract at residues 129–172 (EAATASSSSTPAPTPASTSTSASSSEETMLQSSVQQRAMFSDFV) is disordered. Residues 130–156 (AATASSSSTPAPTPASTSTSASSSEET) are compositionally biased toward low complexity. Over residues 157–166 (MLQSSVQQRA) the composition is skewed to polar residues.

This sequence belongs to the cystatin family.

The protein resides in the secreted. Its function is as follows. Secreted effector that interacts with and inhibits host apoplastic pathogenesis-related papain-like cysteine proteases. Inhibition of host proteases by a pathogen extracellular protease inhibitor forms a specific type of defense-counterdefense mechanism between plants and microbial pathogens. This chain is Cystatin-like cysteine protease inhibitor EPIC4, found in Phytophthora infestans (Potato late blight agent).